A 691-amino-acid chain; its full sequence is POU domain, class 6, transcription factor 2 (691 aa).

Positions 25 to 36 (MNAELRGEDKAA) are enriched in basic and acidic residues. 3 disordered regions span residues 25–93 (MNAE…PVGP), 186–297 (LQQQ…LQLV), and 435–461 (SQAS…SALS). Residues 186–195 (LQQQQQQQQQ) are compositionally biased toward low complexity. Positions 196–210 (QPPPSTNQHPQPAPQ) are enriched in pro residues. Low complexity predominate over residues 211–220 (APSQSQQQPL). Residues 221–238 (QPTPPQQPPPASQQPPAP) show a composition bias toward pro residues. Low complexity-rich tracts occupy residues 239–280 (TSQL…SQSP) and 438–461 (SMSQ…SALS). The region spanning 476–586 (VDGVNLEEIR…VLERWMAEAE (111 aa)) is the POU-specific domain. The segment at residues 607 to 666 (KRKRRTSFTPQALEILNAHFEKNTHPSGQEMTEIAEKLNYDREVVRVWFCNKRQALKNTI) is a DNA-binding region (homeobox).

Belongs to the POU transcription factor family. Class-6 subfamily. As to expression, expressed only within the CNS, where its expression is restricted to the medical habenulla, to a dispersed population of neurons in the dorsal hypothalamus, and to subsets of ganglion and amacrine cells in the retina.

It localises to the nucleus. Probable transcription factor likely to be involved in early steps in the differentiation of amacrine and ganglion cells. Recognizes and binds to the DNA sequence 5'-ATGCAAAT-3'. Isoform 1 does not bind DNA. This chain is POU domain, class 6, transcription factor 2 (POU6F2), found in Homo sapiens (Human).